We begin with the raw amino-acid sequence, 371 residues long: Protein SOMBRERO (371 aa).

The region spanning 17–166 is the NAC domain; sequence VPPGFRFHPT…GWVVCRVFKK (150 aa). The DNA-binding element occupies 118–172; that stretch reads IGLRKTLVFYTGRAPHGQKTEWIMHEYRLDDSENEIQEDGWVVCRVFKKKNHFRG. Disordered stretches follow at residues 176–213 and 316–355; these read EQEQ…LILH and VQNH…NQRF. Residues 192–201 show a composition bias toward basic and acidic residues; it reads NDHDHHHHID. Low complexity-rich tracts occupy residues 202–213 and 340–349; these read SNSNNHSPLILH and GNNNGGSSSS.

As to expression, accumulates in maturing root cap cells, in both COL and LRC cells.

It is found in the nucleus. Functionally, transcription regulator. Together with BRN1 and BRN2, regulates cellular maturation of root cap. Represses stem cell-like divisions in the root cap daughter cells, and thus promotes daughter cell fate. Inhibits expression of its positive regulator FEZ in a feedback loop for controlled switches in cell division plane. Promotes the expression of genes involved in secondary cell walls (SCW) biosynthesis. The protein is Protein SOMBRERO (SMB) of Arabidopsis thaliana (Mouse-ear cress).